Consider the following 450-residue polypeptide: tRNA modification GTPase MnmE (450 aa).

Residues Arg24, Glu82, and Lys121 each contribute to the (6S)-5-formyl-5,6,7,8-tetrahydrofolate site. Residues 218 to 375 (GMHVVLVGQP…LRQVLLEAVG (158 aa)) enclose the TrmE-type G domain. Position 228 (Asn228) interacts with K(+). GTP-binding positions include 228–233 (NVGKSS), 247–253 (TDIAGTT), 272–275 (DTAG), and 356–358 (SAR). Ser232 contacts Mg(2+). K(+) is bound by residues Thr247, Ile249, and Thr252. A Mg(2+)-binding site is contributed by Thr253. Lys450 is a (6S)-5-formyl-5,6,7,8-tetrahydrofolate binding site.

The protein belongs to the TRAFAC class TrmE-Era-EngA-EngB-Septin-like GTPase superfamily. TrmE GTPase family. In terms of assembly, homodimer. Heterotetramer of two MnmE and two MnmG subunits. The cofactor is K(+).

Its subcellular location is the cytoplasm. Exhibits a very high intrinsic GTPase hydrolysis rate. Involved in the addition of a carboxymethylaminomethyl (cmnm) group at the wobble position (U34) of certain tRNAs, forming tRNA-cmnm(5)s(2)U34. The protein is tRNA modification GTPase MnmE of Laribacter hongkongensis (strain HLHK9).